The chain runs to 158 residues: Cyclic pyranopterin monophosphate synthase (158 aa).

Substrate is bound by residues 76–78 (LCH) and 114–115 (ME). Residue Asp-129 is part of the active site.

Belongs to the MoaC family. As to quaternary structure, homohexamer; trimer of dimers.

It catalyses the reaction (8S)-3',8-cyclo-7,8-dihydroguanosine 5'-triphosphate = cyclic pyranopterin phosphate + diphosphate. Its pathway is cofactor biosynthesis; molybdopterin biosynthesis. Its function is as follows. Catalyzes the conversion of (8S)-3',8-cyclo-7,8-dihydroguanosine 5'-triphosphate to cyclic pyranopterin monophosphate (cPMP). This is Cyclic pyranopterin monophosphate synthase from Shewanella halifaxensis (strain HAW-EB4).